We begin with the raw amino-acid sequence, 179 residues long: Caveolin-1 (179 aa).

An N-acetylserine modification is found at serine 2. Position 2 is a phosphoserine (serine 2). Positions 2–95 (SGGKYVDSEG…WKASFTTFTV (94 aa)) are required for homooligomerization. Residues 2 to 105 (SGGKYVDSEG…TKYWFYRLLS (104 aa)) lie on the Cytoplasmic side of the membrane. Lysine 5 bears the N6-acetyllysine; alternate mark. Lysine 5 is covalently cross-linked (Glycyl lysine isopeptide (Lys-Gly) (interchain with G-Cter in ubiquitin); alternate). Tyrosine 6 carries the post-translational modification Phosphotyrosine. Serine 9 bears the Phosphoserine mark. At tyrosine 14 the chain carries Phosphotyrosine; by ABL1. Tyrosine 25 is modified (phosphotyrosine). Glycyl lysine isopeptide (Lys-Gly) (interchain with G-Cter in ubiquitin) cross-links involve residues lysine 26 and lysine 30. Serine 37 is modified (phosphoserine). Residues lysine 39, lysine 48, and lysine 58 each participate in a glycyl lysine isopeptide (Lys-Gly) (interchain with G-Cter in ubiquitin) cross-link. An interaction with CAVIN3 region spans residues 83–95 (DGIWKASFTTFTV). The segment at residues 106-126 (ALFGIPMALIWGIYFAILSFL) is an intramembrane region (helical). Over 127–179 (HIWAVVPCIKSFLIEIQCISRVYSIYVHTFCDPLFEAIGKVFSNIRINMQKEI) the chain is Cytoplasmic. Residues 132 to 143 (VPCIKSFLIEIQ) form an interacts with SPRY1, SPRY2, SPRY3 and SPRY4 region. 3 S-palmitoyl cysteine lipidation sites follow: cysteine 134, cysteine 144, and cysteine 157. An interacts with SPRY1, SPRY2, and SPRY4 region spans residues 150–161 (SIYVHTFCDPLF). An interacts with SPRY1, SPRY2, SPRY3 and SPRY4 region spans residues 168 to 179 (FSNIRINMQKEI).

This sequence belongs to the caveolin family. As to quaternary structure, homooligomer. Interacts with GLIPR2. Interacts with NOSTRIN. Interacts with SNAP25 and STX1A. Interacts (via the N-terminus) with DPP4; the interaction is direct. Interacts with CTNNB1, CDH1 and JUP. Interacts with PACSIN2; this interaction induces membrane tubulation. Interacts with SLC7A9. Interacts with BMX and BTK. Interacts with TGFBR1. Interacts with CAVIN3 (via leucine-zipper domain) in a cholesterol-sensitive manner. Interacts with CAVIN1. Interacts with EHD2 in a cholesterol-dependent manner. Forms a ternary complex with UBXN6 and VCP; mediates CAV1 targeting to lysosomes for degradation. Interacts with ABCG1; this interaction regulates ABCG1-mediated cholesterol efflux. Interacts with NEU3; this interaction enhances NEU3 sialidase activity within caveola. Interacts (via C-terminus) with SPRY1, SPRY2 (via C-terminus), SPRY3, and SPRY4. Interacts with IGFBP5; this interaction allows trafficking of IGFBP5 from the plasma membrane to the nucleus. Phosphorylated at Tyr-14 by ABL1 in response to oxidative stress. In terms of processing, ubiquitinated. Undergo monoubiquitination and multi- and/or polyubiquitination. Monoubiquitination of N-terminal lysines promotes integration in a ternary complex with UBXN6 and VCP which promotes oligomeric CAV1 targeting to lysosomes for degradation. Ubiquitinated by ZNRF1; leading to degradation and modulation of the TLR4-mediated immune response.

The protein resides in the golgi apparatus membrane. The protein localises to the cell membrane. It localises to the membrane. It is found in the caveola. Its subcellular location is the membrane raft. In terms of biological role, may act as a scaffolding protein within caveolar membranes. Forms a stable heterooligomeric complex with CAV2 that targets to lipid rafts and drives caveolae formation. Mediates the recruitment of CAVIN proteins (CAVIN1/2/3/4) to the caveolae. Interacts directly with G-protein alpha subunits and can functionally regulate their activity. Involved in the costimulatory signal essential for T-cell receptor (TCR)-mediated T-cell activation. Its binding to DPP4 induces T-cell proliferation and NF-kappa-B activation in a T-cell receptor/CD3-dependent manner. Recruits CTNNB1 to caveolar membranes and may regulate CTNNB1-mediated signaling through the Wnt pathway. Negatively regulates TGFB1-mediated activation of SMAD2/3 by mediating the internalization of TGFBR1 from membrane rafts leading to its subsequent degradation. Binds 20(S)-hydroxycholesterol (20(S)-OHC). The polypeptide is Caveolin-1 (CAV1) (Eulemur macaco macaco (Black lemur)).